We begin with the raw amino-acid sequence, 573 residues long: WRKY transcription factor SUSIBA2 (573 aa).

Disordered stretches follow at residues 56-133 (AHPD…CSRE) and 157-192 (PAEV…DDGY). Positions 64–85 (PRDKSVRNAHEDRGSRDFEFKP) are enriched in basic and acidic residues. Low complexity predominate over residues 108 to 122 (MQNQSMNPSSSSSNM). Polar residues predominate over residues 163 to 182 (SEPQQMNSSDNAMQEPQSEN). The segment covering 183–192 (VADKSADDGY) has biased composition (basic and acidic residues). Residues 183–247 (VADKSADDGY…YKGRHNHPKP (65 aa)) constitute a DNA-binding region (WRKY 1). 4 residues coordinate Zn(2+): cysteine 214, cysteine 219, histidine 242, and histidine 244. The interval 240 to 332 (GRHNHPKPQP…EDLESKRRKM (93 aa)) is disordered. Residues 263-277 (GEERYDGASAADDKS) are compositionally biased toward basic and acidic residues. A DNA-binding region (WRKY 2) is located at residues 357–422 (SEVDILDDGY…YEGKHNHEVP (66 aa)). Zn(2+)-binding residues include cysteine 388, cysteine 393, histidine 417, and histidine 419.

This sequence belongs to the WRKY group I family. In terms of tissue distribution, expressed in endosperm, but not in leaves.

Its subcellular location is the nucleus. In terms of biological role, transcription factor involved in starch synthesis. Acts as a transcriptional activator in sugar signaling. Interacts specifically with the SURE and W-box elements, but not with the SP8a element. The polypeptide is WRKY transcription factor SUSIBA2 (Hordeum vulgare (Barley)).